The following is a 924-amino-acid chain: Nodulation receptor kinase (924 aa).

Positions 1-29 (MMELRVICIIRLVVACVLCLCIFIRSASS) are cleaved as a signal peptide. Residues 361-382 (EVIQKMRKELLLQNQDNEALES) adopt a coiled-coil conformation. LRR repeat units lie at residues 406 to 428 (VITK…VTEM), 430 to 452 (KLQI…PPSS), 453 to 475 (LLIS…IISL), and 477 to 498 (HLNS…AKLN). The chain crosses the membrane as a helical span at residues 520–540 (FMIGAITSGSILITLAVVILF). The region spanning 595-872 (EKYKTLIGEG…IVRELEDALI (278 aa)) is the Protein kinase domain. Residues 601–609 (IGEGGFGSV) and K623 each bind ATP. The active-site Proton acceptor is the D721.

Belongs to the protein kinase superfamily. Ser/Thr protein kinase family. In terms of processing, may be phosphorylated.

The protein resides in the membrane. The catalysed reaction is L-seryl-[protein] + ATP = O-phospho-L-seryl-[protein] + ADP + H(+). The enzyme catalyses L-threonyl-[protein] + ATP = O-phospho-L-threonyl-[protein] + ADP + H(+). In terms of biological role, involved in the perception of symbiotic fungi and bacteria and required for the calcium spiking. Part of the perception/transduction system leading to nodulation or mycorrhizal infection. This Pisum sativum (Garden pea) protein is Nodulation receptor kinase (NORK).